The chain runs to 491 residues: F-box protein At3g59000 (491 aa).

The region spanning 1-49 is the F-box domain; it reads MDRVGSLPDELLSHILSFLTTKEAALTSLLSKRWRYLIAFVPNLAFDDI.

As to quaternary structure, part of a SCF (ASK-cullin-F-box) protein ligase complex. Interacts with ASK4.

Its subcellular location is the nucleus. It functions in the pathway protein modification; protein ubiquitination. In terms of biological role, component of SCF(ASK-cullin-F-box) E3 ubiquitin ligase complexes, which may mediate the ubiquitination and subsequent proteasomal degradation of target proteins. In Arabidopsis thaliana (Mouse-ear cress), this protein is F-box protein At3g59000.